The sequence spans 37 residues: Photosystem II reaction center protein M (37 aa).

A helical transmembrane segment spans residues 7-27; sequence GFIAVLMFLAIPTAFLLIPYV.

This sequence belongs to the PsbM family. In terms of assembly, PSII is composed of 1 copy each of membrane proteins PsbA, PsbB, PsbC, PsbD, PsbE, PsbF, PsbH, PsbI, PsbJ, PsbK, PsbL, PsbM, PsbT, PsbX, PsbY, PsbZ, Psb30/Ycf12, at least 3 peripheral proteins of the oxygen-evolving complex and a large number of cofactors. It forms dimeric complexes.

It localises to the plastid. Its subcellular location is the chloroplast thylakoid membrane. Functionally, one of the components of the core complex of photosystem II (PSII). PSII is a light-driven water:plastoquinone oxidoreductase that uses light energy to abstract electrons from H(2)O, generating O(2) and a proton gradient subsequently used for ATP formation. It consists of a core antenna complex that captures photons, and an electron transfer chain that converts photonic excitation into a charge separation. This subunit is found at the monomer-monomer interface. The polypeptide is Photosystem II reaction center protein M (Pinus koraiensis (Korean pine)).